The following is a 642-amino-acid chain: MSLLHTFWRLPVAVFFEPHEENVLRCPERVLRRLLEDAAVTMRGGGWREDVLMDRVRKRYLRQELRDLGHRVQTYCEDLEGRVSEAEALLNQQCELDEGPSPRTLLQPPCRPRSSSPGTGVAGASAVPHGLYSRHDAITGPAAAPSDVVAPSDAVAASAAAGASSTWLAQCAERPLPGNVPSYFGITQNDPFIRFHTDFRGEVVNTMFENASTWTFSFGIWYYRLKRGLYTQPRWKRVYHLAQMDNFSISQELLLGVVNALENVTVYPTYDCVLSDLEAAACLLAAYGHALWEGRDPPDSVATVLGELPQLLPRLADDVSREIAAWEGPVAAGNNYYAYRDSPDLRYYMPLSGGRHYHPGTFDRHVLVRLFHKRGVIQHLPGYGTITEELVQERLSGQVRDDVLSLWSRRLLVGKLGRDVPVFVHEQQYLRSGLTCLAGLLLLWKVTNADSVFAPRTGKFTLADLLGSDAVAGGGLPGGRAGGEEEGYGGRHGRVRNFEFLVRYYIGPWYARDPAVTLSQLFPGLALLAVTESVRSGWDPSRREDSAGGGDGGGAVLMQLSKSNPVADYMFAQSSKQYGDLRRLEVHDALLFHYEHGLGRLLSVTLPRHRVSTLGSSLFNVNDIYELLYFLVLGFLPSVAVL.

An interaction with major capsid protein/MCP region spans residues 1–48 (MSLLHTFWRLPVAVFFEPHEENVLRCPERVLRRLLEDAAVTMRGGGWR). Positions 97–125 (DEGPSPRTLLQPPCRPRSSSPGTGVAGAS) are disordered.

It belongs to the herpesviridae CVC2 protein family. In terms of assembly, heterodimerizes with CVC1. Interacts with major capsid protein/MCP and triplex capsid protein 1/TRX1 at the pentamer vertices. Interacts with the large tegument protein/LTP.

It is found in the virion. The protein localises to the host nucleus. Functionally, capsid vertex-specific component that plays a role during viral DNA encapsidation, assuring correct genome cleavage and presumably stabilizing capsids that contain full-length viral genomes. Participates in the interaction between the capsid and the tegument through interaction with the large tegument protein/LTP. The protein is Capsid vertex component 2 of Homo sapiens (Human).